The following is a 93-amino-acid chain: Small ribosomal subunit protein uS19 (93 aa).

The interval 73 to 93 is disordered; that stretch reads EFSPTRTYRGHDKKDKKIQKK.

It belongs to the universal ribosomal protein uS19 family.

Its function is as follows. Protein S19 forms a complex with S13 that binds strongly to the 16S ribosomal RNA. The sequence is that of Small ribosomal subunit protein uS19 from Phytoplasma mali (strain AT).